Consider the following 290-residue polypeptide: NAD kinase (290 aa).

The active-site Proton acceptor is Asp72. NAD(+) contacts are provided by residues 72–73 (DG), Lys77, 145–146 (NE), Asp175, 186–191 (TAYSLS), and Ala210.

This sequence belongs to the NAD kinase family. A divalent metal cation serves as cofactor.

It localises to the cytoplasm. It catalyses the reaction NAD(+) + ATP = ADP + NADP(+) + H(+). Functionally, involved in the regulation of the intracellular balance of NAD and NADP, and is a key enzyme in the biosynthesis of NADP. Catalyzes specifically the phosphorylation on 2'-hydroxyl of the adenosine moiety of NAD to yield NADP. This is NAD kinase from Bacteroides fragilis (strain ATCC 25285 / DSM 2151 / CCUG 4856 / JCM 11019 / LMG 10263 / NCTC 9343 / Onslow / VPI 2553 / EN-2).